The primary structure comprises 81 residues: MAAVAAASAELLIIGWYIFRVLLQVFLECCIYWVGFAFRNPPGTQPIARSEVFRYSLQKLAYTVSRTGRQVLGERRQRAPN.

It belongs to the neuronatin family.

Functionally, may participate in the maintenance of segment identity in the hindbrain and pituitary development, and maturation or maintenance of the overall structure of the nervous system. May function as a regulatory subunit of ion channels. This chain is Neuronatin (NNAT), found in Homo sapiens (Human).